Consider the following 315-residue polypeptide: Cysteine synthase (315 aa).

Hydrogen sulfide-binding residues include asparagine 8 and arginine 35. Lysine 42 bears the N6-(pyridoxal phosphate)lysine mark. Residues asparagine 72 and 177-181 (GTGGT) each bind pyridoxal 5'-phosphate. Leucine 269 serves as a coordination point for hydrogen sulfide. Serine 273 serves as a coordination point for pyridoxal 5'-phosphate.

The protein belongs to the cysteine synthase/cystathionine beta-synthase family. In terms of assembly, homodimer. Pyridoxal 5'-phosphate is required as a cofactor.

It catalyses the reaction O-acetyl-L-serine + hydrogen sulfide = L-cysteine + acetate. It participates in amino-acid biosynthesis; L-cysteine biosynthesis; L-cysteine from L-serine: step 2/2. The polypeptide is Cysteine synthase (cysK) (Buchnera aphidicola subsp. Acyrthosiphon pisum (strain APS) (Acyrthosiphon pisum symbiotic bacterium)).